The following is a 506-amino-acid chain: uncharacterized protein (506 aa).

It belongs to the Mg-chelatase subunits D/I family. ComM subfamily.

This is an uncharacterized protein from Salmonella typhimurium (strain LT2 / SGSC1412 / ATCC 700720).